The following is a 99-amino-acid chain: Meromycolate extension acyl carrier protein (99 aa).

The Carrier domain occupies 3–81 (ATQEEIIAGL…DVVAYIQKLE (79 aa)). Ser-41 carries the O-(pantetheine 4'-phosphoryl)serine modification. Lys-79 participates in a covalent cross-link: Isoglutamyl lysine isopeptide (Lys-Gln) (interchain with Q-Cter in protein Pup).

It belongs to the acyl carrier protein (ACP) family. Post-translationally, 4'-phosphopantetheine is transferred from CoA to a specific serine of apo-AcpM.

It is found in the cytoplasm. In terms of biological role, acyl carrier protein involved in meromycolate extension. In Mycolicibacterium smegmatis (strain ATCC 700084 / mc(2)155) (Mycobacterium smegmatis), this protein is Meromycolate extension acyl carrier protein (acpM).